The primary structure comprises 137 residues: Large ribosomal subunit protein uL16 (137 aa).

The protein belongs to the universal ribosomal protein uL16 family. In terms of assembly, part of the 50S ribosomal subunit.

In terms of biological role, binds 23S rRNA and is also seen to make contacts with the A and possibly P site tRNAs. The polypeptide is Large ribosomal subunit protein uL16 (Bartonella henselae (strain ATCC 49882 / DSM 28221 / CCUG 30454 / Houston 1) (Rochalimaea henselae)).